A 342-amino-acid polypeptide reads, in one-letter code: tRNA N6-adenosine threonylcarbamoyltransferase (342 aa).

The Fe cation site is built by H114 and H118. Substrate-binding positions include 136–140, D169, G182, D186, and N275; that span reads LVSGG. Residue D301 participates in Fe cation binding.

It belongs to the KAE1 / TsaD family. It depends on Fe(2+) as a cofactor.

It is found in the cytoplasm. The catalysed reaction is L-threonylcarbamoyladenylate + adenosine(37) in tRNA = N(6)-L-threonylcarbamoyladenosine(37) in tRNA + AMP + H(+). Required for the formation of a threonylcarbamoyl group on adenosine at position 37 (t(6)A37) in tRNAs that read codons beginning with adenine. Is involved in the transfer of the threonylcarbamoyl moiety of threonylcarbamoyl-AMP (TC-AMP) to the N6 group of A37, together with TsaE and TsaB. TsaD likely plays a direct catalytic role in this reaction. This Streptococcus pyogenes serotype M4 (strain MGAS10750) protein is tRNA N6-adenosine threonylcarbamoyltransferase.